Consider the following 1005-residue polypeptide: Retinoblastoma-related protein (1005 aa).

The interval Thr-404 to Leu-605 is domain A. Positions Thr-404–Pro-853 are pocket. A spacer region spans residues Thr-606–Glu-722. Residues Thr-723 to Pro-853 are domain B. The span at Val-863–Glu-873 shows a compositional bias: polar residues. The interval Val-863–Asp-899 is disordered.

It belongs to the retinoblastoma protein (RB) family.

It localises to the nucleus. Functionally, regulator of biological processes that recruits a histone deacetylase to control gene transcription. May play a role in the entry into mitosis, negatively regulating the cell proliferation. Formation of stable complexes with geminiviridae replication-associated proteins may create a cellular environment which favors viral DNA replication. This chain is Retinoblastoma-related protein (RBR), found in Pilosella piloselloides (Glaucous king-devil hawkweed).